A 772-amino-acid polypeptide reads, in one-letter code: Polyribonucleotide nucleotidyltransferase (772 aa).

Asp486 and Asp492 together coordinate Mg(2+). The KH domain occupies 553 to 612 (PRIETLQIDKSKIRDVIGTGGKVIREIVATTGAKVDIDDEGLIKISSSDLTQIEAAKNWI). The region spanning 622–690 (GKIYKGKVVN…QRGKVRLSMR (69 aa)) is the S1 motif domain. Positions 695 to 772 (ETGAELEDTR…HMPAFLKSDD (78 aa)) are disordered. Over residues 701 to 760 (EDTRPPREPREPRGDRGDRGDRGDRRGPRGDRGPRREGGDRGPRREGGDRPRRDRDDGPA) the composition is skewed to basic and acidic residues.

Belongs to the polyribonucleotide nucleotidyltransferase family. Mg(2+) is required as a cofactor.

The protein resides in the cytoplasm. It carries out the reaction RNA(n+1) + phosphate = RNA(n) + a ribonucleoside 5'-diphosphate. Its function is as follows. Involved in mRNA degradation. Catalyzes the phosphorolysis of single-stranded polyribonucleotides processively in the 3'- to 5'-direction. In Novosphingobium aromaticivorans (strain ATCC 700278 / DSM 12444 / CCUG 56034 / CIP 105152 / NBRC 16084 / F199), this protein is Polyribonucleotide nucleotidyltransferase.